Reading from the N-terminus, the 496-residue chain is Probable cytosol aminopeptidase (496 aa).

Positions 258 and 263 each coordinate Mn(2+). Residue K270 is part of the active site. D281, D340, and E342 together coordinate Mn(2+). Residue R344 is part of the active site.

The protein belongs to the peptidase M17 family. Mn(2+) serves as cofactor.

It is found in the cytoplasm. The enzyme catalyses Release of an N-terminal amino acid, Xaa-|-Yaa-, in which Xaa is preferably Leu, but may be other amino acids including Pro although not Arg or Lys, and Yaa may be Pro. Amino acid amides and methyl esters are also readily hydrolyzed, but rates on arylamides are exceedingly low.. It carries out the reaction Release of an N-terminal amino acid, preferentially leucine, but not glutamic or aspartic acids.. Presumably involved in the processing and regular turnover of intracellular proteins. Catalyzes the removal of unsubstituted N-terminal amino acids from various peptides. In Helicobacter pylori (strain G27), this protein is Probable cytosol aminopeptidase.